Consider the following 462-residue polypeptide: Argininosuccinate lyase (462 aa).

The protein belongs to the lyase 1 family. Argininosuccinate lyase subfamily.

It is found in the cytoplasm. The catalysed reaction is 2-(N(omega)-L-arginino)succinate = fumarate + L-arginine. It functions in the pathway amino-acid biosynthesis; L-arginine biosynthesis; L-arginine from L-ornithine and carbamoyl phosphate: step 3/3. The protein is Argininosuccinate lyase of Ehrlichia ruminantium (strain Welgevonden).